A 288-amino-acid polypeptide reads, in one-letter code: Quinate/shikimate dehydrogenase (288 aa).

2 residues coordinate substrate: K71 and D107. Residues 132–135, 155–158, K205, 232–235, and G255 each bind NAD(+); these read AGGA, NRRD, and CVYN.

The protein belongs to the shikimate dehydrogenase family. As to quaternary structure, homodimer.

The catalysed reaction is L-quinate + NAD(+) = 3-dehydroquinate + NADH + H(+). The enzyme catalyses L-quinate + NADP(+) = 3-dehydroquinate + NADPH + H(+). It carries out the reaction shikimate + NADP(+) = 3-dehydroshikimate + NADPH + H(+). It catalyses the reaction shikimate + NAD(+) = 3-dehydroshikimate + NADH + H(+). It functions in the pathway metabolic intermediate biosynthesis; chorismate biosynthesis; chorismate from D-erythrose 4-phosphate and phosphoenolpyruvate: step 4/7. The actual biological function of YdiB remains unclear, nor is it known whether 3-dehydroshikimate or quinate represents the natural substrate. Catalyzes the reversible NAD-dependent reduction of both 3-dehydroshikimate (DHSA) and 3-dehydroquinate to yield shikimate (SA) and quinate, respectively. It can use both NAD or NADP for catalysis, however it has higher catalytic efficiency with NAD. In Escherichia coli O7:K1 (strain IAI39 / ExPEC), this protein is Quinate/shikimate dehydrogenase.